A 454-amino-acid polypeptide reads, in one-letter code: Bifunctional protein GlmU (454 aa).

The tract at residues Met-1–Arg-226 is pyrophosphorylase. UDP-N-acetyl-alpha-D-glucosamine-binding positions include Leu-7 to Gly-10, Lys-21, Gln-73, and Gly-78 to Thr-79. Asp-103 is a Mg(2+) binding site. Residues Gly-140, Glu-155, Asn-170, and Asn-224 each contribute to the UDP-N-acetyl-alpha-D-glucosamine site. Asn-224 contributes to the Mg(2+) binding site. The linker stretch occupies residues Arg-227–Glu-247. The interval Gly-248–Ser-454 is N-acetyltransferase. UDP-N-acetyl-alpha-D-glucosamine-binding residues include Arg-329 and Lys-347. Catalysis depends on His-359, which acts as the Proton acceptor. UDP-N-acetyl-alpha-D-glucosamine-binding residues include Tyr-362 and Asn-373. Acetyl-CoA is bound by residues Ala-376, Ala-419, and Arg-436.

It in the N-terminal section; belongs to the N-acetylglucosamine-1-phosphate uridyltransferase family. In the C-terminal section; belongs to the transferase hexapeptide repeat family. In terms of assembly, homotrimer. Requires Mg(2+) as cofactor.

It localises to the cytoplasm. The catalysed reaction is alpha-D-glucosamine 1-phosphate + acetyl-CoA = N-acetyl-alpha-D-glucosamine 1-phosphate + CoA + H(+). The enzyme catalyses N-acetyl-alpha-D-glucosamine 1-phosphate + UTP + H(+) = UDP-N-acetyl-alpha-D-glucosamine + diphosphate. Its pathway is nucleotide-sugar biosynthesis; UDP-N-acetyl-alpha-D-glucosamine biosynthesis; N-acetyl-alpha-D-glucosamine 1-phosphate from alpha-D-glucosamine 6-phosphate (route II): step 2/2. The protein operates within nucleotide-sugar biosynthesis; UDP-N-acetyl-alpha-D-glucosamine biosynthesis; UDP-N-acetyl-alpha-D-glucosamine from N-acetyl-alpha-D-glucosamine 1-phosphate: step 1/1. It participates in bacterial outer membrane biogenesis; LPS lipid A biosynthesis. Functionally, catalyzes the last two sequential reactions in the de novo biosynthetic pathway for UDP-N-acetylglucosamine (UDP-GlcNAc). The C-terminal domain catalyzes the transfer of acetyl group from acetyl coenzyme A to glucosamine-1-phosphate (GlcN-1-P) to produce N-acetylglucosamine-1-phosphate (GlcNAc-1-P), which is converted into UDP-GlcNAc by the transfer of uridine 5-monophosphate (from uridine 5-triphosphate), a reaction catalyzed by the N-terminal domain. In Synechococcus sp. (strain CC9311), this protein is Bifunctional protein GlmU.